The chain runs to 234 residues: Large ribosomal subunit protein uL1 (234 aa).

Belongs to the universal ribosomal protein uL1 family. Part of the 50S ribosomal subunit.

In terms of biological role, binds directly to 23S rRNA. The L1 stalk is quite mobile in the ribosome, and is involved in E site tRNA release. Its function is as follows. Protein L1 is also a translational repressor protein, it controls the translation of the L11 operon by binding to its mRNA. This chain is Large ribosomal subunit protein uL1, found in Aliivibrio fischeri (strain MJ11) (Vibrio fischeri).